Reading from the N-terminus, the 406-residue chain is Terminal uridylyltransferase 7 (406 aa).

The N-terminal 15 residues, 1 to 15 (MNVAKREFIRGMMAH), are a transit peptide targeting the mitochondrion. Residues Ser-54 and 64-65 (SD) contribute to the UTP site. The Mg(2+) site is built by Asp-65 and Asp-67. UTP-binding positions include 138 to 142 (GVENS), Lys-164, Lys-168, and 181 to 183 (NSF).

It belongs to the DNA polymerase type-B-like family. In terms of assembly, component of the mitochondrial RNA editing core complex-like (RECC-like), also known as the editosome-like complex; only a small proportion of MEAT1 associates with the complex. Interacts with RNA-editing ligase REL1. Mg(2+) serves as cofactor.

It localises to the mitochondrion matrix. It catalyses the reaction RNA(n) + UTP = RNA(n)-3'-uridine ribonucleotide + diphosphate. Its function is as follows. Terminal uridylyltransferase which, as part of the mitochondrial RNA editing core-like complex (RECC-like), is involved in the post-transcriptional editing of mitochondrial RNA, a process involving the addition and deletion of uridine (U) nucleotides in the pre-mRNA. Specifically, catalyzes the addition of U to single-stranded RNA with a preference for a 3'-terminal U and adds the number of Us specified by a guide RNA (gRNA) to precleaved double-stranded RNA editing substrates. Essential for insect and bloodstream developmental forms viability. In Trypanosoma brucei brucei, this protein is Terminal uridylyltransferase 7.